The following is a 507-amino-acid chain: Lysine--tRNA ligase (507 aa).

A 'HIGH' region motif is present at residues 26-34 (PSGPIHVGN). A 'KMSKS' region motif is present at residues 270–274 (AMHSS).

This sequence belongs to the class-I aminoacyl-tRNA synthetase family.

It is found in the cytoplasm. It carries out the reaction tRNA(Lys) + L-lysine + ATP = L-lysyl-tRNA(Lys) + AMP + diphosphate. The polypeptide is Lysine--tRNA ligase (lysS) (Thermoplasma acidophilum (strain ATCC 25905 / DSM 1728 / JCM 9062 / NBRC 15155 / AMRC-C165)).